We begin with the raw amino-acid sequence, 211 residues long: Thiamine-phosphate synthase (211 aa).

4-amino-2-methyl-5-(diphosphooxymethyl)pyrimidine is bound by residues 44 to 48 (QYRNK) and asparagine 75. Mg(2+) is bound by residues aspartate 76 and aspartate 95. Serine 114 provides a ligand contact to 4-amino-2-methyl-5-(diphosphooxymethyl)pyrimidine. Position 140-142 (140-142 (TKS)) interacts with 2-[(2R,5Z)-2-carboxy-4-methylthiazol-5(2H)-ylidene]ethyl phosphate. Lysine 143 is a binding site for 4-amino-2-methyl-5-(diphosphooxymethyl)pyrimidine. Glycine 171 lines the 2-[(2R,5Z)-2-carboxy-4-methylthiazol-5(2H)-ylidene]ethyl phosphate pocket.

It belongs to the thiamine-phosphate synthase family. Requires Mg(2+) as cofactor.

The enzyme catalyses 2-[(2R,5Z)-2-carboxy-4-methylthiazol-5(2H)-ylidene]ethyl phosphate + 4-amino-2-methyl-5-(diphosphooxymethyl)pyrimidine + 2 H(+) = thiamine phosphate + CO2 + diphosphate. The catalysed reaction is 2-(2-carboxy-4-methylthiazol-5-yl)ethyl phosphate + 4-amino-2-methyl-5-(diphosphooxymethyl)pyrimidine + 2 H(+) = thiamine phosphate + CO2 + diphosphate. It carries out the reaction 4-methyl-5-(2-phosphooxyethyl)-thiazole + 4-amino-2-methyl-5-(diphosphooxymethyl)pyrimidine + H(+) = thiamine phosphate + diphosphate. It participates in cofactor biosynthesis; thiamine diphosphate biosynthesis; thiamine phosphate from 4-amino-2-methyl-5-diphosphomethylpyrimidine and 4-methyl-5-(2-phosphoethyl)-thiazole: step 1/1. Functionally, condenses 4-methyl-5-(beta-hydroxyethyl)thiazole monophosphate (THZ-P) and 2-methyl-4-amino-5-hydroxymethyl pyrimidine pyrophosphate (HMP-PP) to form thiamine monophosphate (TMP). The polypeptide is Thiamine-phosphate synthase (Koribacter versatilis (strain Ellin345)).